A 612-amino-acid chain; its full sequence is Heparan-sulfate 6-O-sulfotransferase 2 (612 aa).

Residues 1-4 (MALP) lie on the Cytoplasmic side of the membrane. A helical; Signal-anchor for type II membrane protein transmembrane segment spans residues 5–27 (AFAARALGPPLQPEQGAPARTTC). The segment at 9 to 52 (RALGPPLQPEQGAPARTTCPRRHSRVEAELAASRPGSVAASVRA) is disordered. The Lumenal segment spans residues 28–612 (PRRHSRVEAE…DYIGSVETWR (585 aa)). A glycan (N-linked (GlcNAc...) asparagine) is linked at asparagine 209. 233–241 (HIQKTGGTT) contributes to the 3'-phosphoadenylyl sulfate binding site. Substrate-binding positions include 263-264 (KK), arginine 280, tryptophan 285, and histidine 290. Catalysis depends on histidine 290, which acts as the Proton acceptor. The 3'-phosphoadenylyl sulfate site is built by arginine 325 and serine 333. Residues histidine 337 and tryptophan 344 each contribute to the substrate site. Residue asparagine 404 is glycosylated (N-linked (GlcNAc...) asparagine). Residue 457–459 (TQY) participates in 3'-phosphoadenylyl sulfate binding. The N-linked (GlcNAc...) asparagine glycan is linked to asparagine 460. 463–464 (RA) lines the 3'-phosphoadenylyl sulfate pocket. The interval 529-612 (HFQSQSQGQS…DYIGSVETWR (84 aa)) is disordered. Residues 531 to 564 (QSQSQGQSQSQSPGQNLSQNPNPNPNQNLTQNLS) show a composition bias toward low complexity. Asparagine 546, asparagine 558, asparagine 562, asparagine 574, and asparagine 599 each carry an N-linked (GlcNAc...) asparagine glycan. The span at 565–577 (HNLTPSSNPNSTQ) shows a compositional bias: polar residues.

Belongs to the sulfotransferase 6 family.

Its subcellular location is the membrane. It carries out the reaction alpha-D-glucosaminyl-[heparan sulfate](n) + 3'-phosphoadenylyl sulfate = 6-sulfo-alpha-D-glucosaminyl-[heparan sulfate](n) + adenosine 3',5'-bisphosphate + H(+). Its function is as follows. 6-O-sulfation enzyme which catalyzes the transfer of sulfate from 3'-phosphoadenosine 5'-phosphosulfate (PAPS) to position 6 of the N-sulfoglucosamine residue (GlcNS) of heparan sulfate. The protein is Heparan-sulfate 6-O-sulfotransferase 2 (Hs6st2) of Mus musculus (Mouse).